Consider the following 127-residue polypeptide: Small ribosomal subunit protein bS16 (127 aa).

The segment at 80–127 (GLKKRPTRNNPHKGEPGKKAQERIAAAKQAAEEAAAAKTESAPISEEV) is disordered. Over residues 81–90 (LKKRPTRNNP) the composition is skewed to basic residues. Over residues 91 to 101 (HKGEPGKKAQE) the composition is skewed to basic and acidic residues. Positions 102–121 (RIAAAKQAAEEAAAAKTESA) are enriched in low complexity.

Belongs to the bacterial ribosomal protein bS16 family.

In Bartonella henselae (strain ATCC 49882 / DSM 28221 / CCUG 30454 / Houston 1) (Rochalimaea henselae), this protein is Small ribosomal subunit protein bS16.